Here is a 325-residue protein sequence, read N- to C-terminus: Pyruvate dehydrogenase E1 component subunit beta (325 aa).

Glu-60 contacts thiamine diphosphate.

In terms of assembly, heterodimer of an alpha and a beta chain. Requires thiamine diphosphate as cofactor.

The catalysed reaction is N(6)-[(R)-lipoyl]-L-lysyl-[protein] + pyruvate + H(+) = N(6)-[(R)-S(8)-acetyldihydrolipoyl]-L-lysyl-[protein] + CO2. Functionally, the pyruvate dehydrogenase complex catalyzes the overall conversion of pyruvate to acetyl-CoA and CO(2). It contains multiple copies of three enzymatic components: pyruvate dehydrogenase (E1), dihydrolipoamide acetyltransferase (E2) and lipoamide dehydrogenase (E3). The sequence is that of Pyruvate dehydrogenase E1 component subunit beta (pdhB) from Staphylococcus aureus (strain Mu50 / ATCC 700699).